A 591-amino-acid chain; its full sequence is NADH-quinone oxidoreductase subunit C/D (591 aa).

The tract at residues 1–182 (MVTVVENIDP…TPYFLNTAKQ (182 aa)) is NADH dehydrogenase I subunit C. The NADH dehydrogenase I subunit D stretch occupies residues 206-591 (DFMFLNIGPN…IDVVMADCDR (386 aa)).

It in the N-terminal section; belongs to the complex I 30 kDa subunit family. The protein in the C-terminal section; belongs to the complex I 49 kDa subunit family. NDH-1 is composed of 13 different subunits. Subunits NuoB, CD, E, F, and G constitute the peripheral sector of the complex.

The protein localises to the cell inner membrane. It catalyses the reaction a quinone + NADH + 5 H(+)(in) = a quinol + NAD(+) + 4 H(+)(out). In terms of biological role, NDH-1 shuttles electrons from NADH, via FMN and iron-sulfur (Fe-S) centers, to quinones in the respiratory chain. The immediate electron acceptor for the enzyme in this species is believed to be ubiquinone. Couples the redox reaction to proton translocation (for every two electrons transferred, four hydrogen ions are translocated across the cytoplasmic membrane), and thus conserves the redox energy in a proton gradient. This is NADH-quinone oxidoreductase subunit C/D from Psychrobacter arcticus (strain DSM 17307 / VKM B-2377 / 273-4).